Reading from the N-terminus, the 301-residue chain is Probable aspartoacylase (301 aa).

Positions 13 and 16 each coordinate Zn(2+). Residues R54 and 61–62 contribute to the substrate site; that span reads NR. Residue H105 coordinates Zn(2+). E163 and Y273 together coordinate substrate.

The protein belongs to the AspA/AstE family. Aspartoacylase subfamily. Requires Zn(2+) as cofactor.

The catalysed reaction is an N-acyl-L-aspartate + H2O = a carboxylate + L-aspartate. The protein is Probable aspartoacylase of Prochlorococcus marinus (strain MIT 9312).